A 630-amino-acid chain; its full sequence is DNA mismatch repair protein MutL (630 aa).

Positions 398-408 (TQTNAFGSMAT) are enriched in polar residues. Positions 398–425 (TQTNAFGSMATSRDSSRGSYSASESRQR) are disordered.

The protein belongs to the DNA mismatch repair MutL/HexB family.

In terms of biological role, this protein is involved in the repair of mismatches in DNA. It is required for dam-dependent methyl-directed DNA mismatch repair. May act as a 'molecular matchmaker', a protein that promotes the formation of a stable complex between two or more DNA-binding proteins in an ATP-dependent manner without itself being part of a final effector complex. The polypeptide is DNA mismatch repair protein MutL (Shewanella baltica (strain OS185)).